A 187-amino-acid chain; its full sequence is Lipid A acyltransferase PagP (187 aa).

Residues 1–26 (MIVAKKYFLVLSFLFVQFALLPQAFS) form the signal peptide. Catalysis depends on residues histidine 59, aspartate 102, and serine 103.

This sequence belongs to the lipid A palmitoyltransferase family. Homodimer.

It localises to the cell outer membrane. It carries out the reaction a lipid A + a 1,2-diacyl-sn-glycero-3-phosphocholine = a hepta-acyl lipid A + a 2-acyl-sn-glycero-3-phosphocholine. The catalysed reaction is a lipid IVA + a 1,2-diacyl-sn-glycero-3-phosphocholine = a lipid IVB + a 2-acyl-sn-glycero-3-phosphocholine. It catalyses the reaction a lipid IIA + a 1,2-diacyl-sn-glycero-3-phosphocholine = a lipid IIB + a 2-acyl-sn-glycero-3-phosphocholine. In terms of biological role, transfers a fatty acid residue from the sn-1 position of a phospholipid to the N-linked hydroxyfatty acid chain on the proximal unit of lipid A or its precursors. This is Lipid A acyltransferase PagP from Citrobacter koseri (strain ATCC BAA-895 / CDC 4225-83 / SGSC4696).